The chain runs to 638 residues: Outer dense fiber protein 2 (638 aa).

Residue Thr-73 is modified to Phosphothreonine. At Ser-76 the chain carries Phosphoserine; by TSSK4. Phosphoserine occurs at positions 87 and 90. Thr-91 bears the Phosphothreonine mark. Residues Ser-96 and Ser-110 each carry the phosphoserine modification. Residue Lys-119 forms a Glycyl lysine isopeptide (Lys-Gly) (interchain with G-Cter in SUMO2) linkage. Ser-120 is modified (phosphoserine). Residues 125 to 198 (QKGERQMAKR…MSKLVEAEMD (74 aa)) adopt a coiled-coil conformation. Residue Thr-212 is modified to Phosphothreonine. 2 coiled-coil regions span residues 226-404 (DINT…AEQL) and 442-616 (EIIV…SDLR). Ser-242 is modified (phosphoserine). The interval 373-396 (KQKGDRDKESLKKAIRAQKERAEK) is disordered. Ser-613 carries the phosphoserine modification.

This sequence belongs to the ODF2 family. Self-associates. Associates with microtubules and forms a fibrillar structure partially linked to the microtubule network. Interacts via its C-terminus with PLK1. Interacts with ODF1. Localized at the distal/subdistal appendages of mother centrioles. Interacts with MARK4; the interaction is required for localization of ODF2 to centrioles. Interacts with TSSK4. Interacts with AKNA. Interacts with QRICH2. Interacts with CFAP58. Interacts with BBOF1. Interacts with CCDC38. Interacts with CCDC42. In terms of processing, tyrosine phosphorylated. Phosphorylated on Ser-76 by TSSK4.

Its subcellular location is the cytoplasm. The protein localises to the cytoskeleton. The protein resides in the microtubule organizing center. It is found in the centrosome. It localises to the cell projection. Its subcellular location is the cilium. The protein localises to the centriole. The protein resides in the spindle pole. It is found in the flagellum. Its function is as follows. Seems to be a major component of sperm tail outer dense fibers (ODF). ODFs are filamentous structures located on the outside of the axoneme in the midpiece and principal piece of the mammalian sperm tail and may help to maintain the passive elastic structures and elastic recoil of the sperm tail. May have a modulating influence on sperm motility. Functions as a general scaffold protein that is specifically localized at the distal/subdistal appendages of mother centrioles. Component of the centrosome matrix required for the localization of PLK1 and NIN to the centrosomes. Required for the formation and/or maintenance of normal CETN1 assembly. This Macaca fascicularis (Crab-eating macaque) protein is Outer dense fiber protein 2 (ODF2).